A 454-amino-acid chain; its full sequence is Tryptophanase (454 aa).

The residue at position 256 (Lys256) is an N6-(pyridoxal phosphate)lysine.

Belongs to the beta-eliminating lyase family. Homotetramer. Requires pyridoxal 5'-phosphate as cofactor.

It carries out the reaction L-tryptophan + H2O = indole + pyruvate + NH4(+). The protein operates within amino-acid degradation; L-tryptophan degradation via pyruvate pathway; indole and pyruvate from L-tryptophan: step 1/1. The polypeptide is Tryptophanase (Hyphomonas neptunium (strain ATCC 15444)).